Reading from the N-terminus, the 281-residue chain is Pantothenate synthetase (281 aa).

Residue 30–37 coordinates ATP; it reads MGNLHQGH. H37 acts as the Proton donor in catalysis. Q61 is a (R)-pantoate binding site. Q61 lines the beta-alanine pocket. 149-152 provides a ligand contact to ATP; sequence GNKD. A (R)-pantoate-binding site is contributed by Q155. Residues I178 and 186 to 189 contribute to the ATP site; that span reads MSSR.

This sequence belongs to the pantothenate synthetase family. As to quaternary structure, homodimer.

It localises to the cytoplasm. The catalysed reaction is (R)-pantoate + beta-alanine + ATP = (R)-pantothenate + AMP + diphosphate + H(+). It functions in the pathway cofactor biosynthesis; (R)-pantothenate biosynthesis; (R)-pantothenate from (R)-pantoate and beta-alanine: step 1/1. Its function is as follows. Catalyzes the condensation of pantoate with beta-alanine in an ATP-dependent reaction via a pantoyl-adenylate intermediate. This Shewanella baltica (strain OS223) protein is Pantothenate synthetase.